The primary structure comprises 225 residues: Platelet-derived growth factor subunit B (225 aa).

The N-terminal stretch at 1–12 (LPLCCYLRLVSA) is a signal peptide. A propeptide spans 13–73 (EGDPIPEELY…ESESSSRGRR (61 aa)) (removed in mature form). Asparagine 55 carries N-linked (GlcNAc...) asparagine glycosylation. Cystine bridges form between cysteine 89–cysteine 133, cysteine 122–cysteine 170, and cysteine 126–cysteine 172. Positions 183–225 (RSPGTSREHRAKTPQTRVTVRTVRIRRPPKGKHRKFKHTHDKK) are cleaved as a propeptide — removed in mature form.

It belongs to the PDGF/VEGF growth factor family. In terms of assembly, antiparallel homodimer; disulfide-linked. Antiparallel heterodimer with PDGFA; disulfide-linked. The PDGFB homodimer interacts with PDGFRA and PDGFRB homodimers, and with heterodimers formed by PDGFRA and PDGFRB. The heterodimer composed of PDGFA and PDGFB interacts with PDGFRB homodimers, and with heterodimers formed by PDGFRA and PDGFRB. Interacts with XLKD1. Interacts with LRP1. Interacts with SORL1 (via the N-terminal ectodomain). Interacts with CD82; this interaction inhibits PDGFB-mediated signaling pathway. In terms of tissue distribution, expressed in a distinct subpopulation of smooth muscle cells in injured arteries.

It is found in the secreted. Its function is as follows. Growth factor that plays an essential role in the regulation of embryonic development, cell proliferation, cell migration, survival and chemotaxis. Potent mitogen for cells of mesenchymal origin. Required for normal proliferation and recruitment of pericytes and vascular smooth muscle cells in the central nervous system, skin, lung, heart and placenta. Required for normal blood vessel development, and for normal development of kidney glomeruli. Plays an important role in wound healing. Signaling is modulated by the formation of heterodimers with PDGFA. The polypeptide is Platelet-derived growth factor subunit B (Pdgfb) (Rattus norvegicus (Rat)).